A 374-amino-acid polypeptide reads, in one-letter code: MAKRDYYEVLGISRDADEKEIKRAYRKLAMKYHPDRNPDDKDAETKFKEASEAYEILADSSKRAAYDQFGHAGVDGQAGGGFGGGGASFSDIFGDVFGDIFGGGGRGRTTRGADLRYTLELDLEEAVKGKTVKINIPGHKECEACDGSGAEKGSRPETCGTCQGMGQVRMQQGFFTVQQACPTCRGSGQIIKNPCKSCHGQGRVRQEKTLSVKVPPGVDTGDRIRLSGEGEMGVDGGPPGDLYVQVAVREHSIFTRDGRNLYCEVPISIVDATLGGELEVPTLDGRVKLKIPPETQTGKLFRLRNKGVSPVRGGPAGDLLCRVIVETPVNLTKRQKELLEEFQQTLDGNNGTHHAPKKTSWFEGVKNFFDEMKF.

One can recognise a J domain in the interval 5–70 (DYYEVLGISR…SKRAAYDQFG (66 aa)). Residues 129–207 (GKTVKINIPG…CHGQGRVRQE (79 aa)) form a CR-type zinc finger. Residues Cys142, Cys145, Cys159, Cys162, Cys181, Cys184, Cys195, and Cys198 each coordinate Zn(2+). CXXCXGXG motif repeat units lie at residues 142–149 (CEACDGSG), 159–166 (CGTCQGMG), 181–188 (CPTCRGSG), and 195–202 (CKSCHGQG). The disordered stretch occupies residues 216 to 238 (PGVDTGDRIRLSGEGEMGVDGGP).

It belongs to the DnaJ family. In terms of assembly, homodimer. Zn(2+) is required as a cofactor.

The protein resides in the cytoplasm. Its function is as follows. Participates actively in the response to hyperosmotic and heat shock by preventing the aggregation of stress-denatured proteins and by disaggregating proteins, also in an autonomous, DnaK-independent fashion. Unfolded proteins bind initially to DnaJ; upon interaction with the DnaJ-bound protein, DnaK hydrolyzes its bound ATP, resulting in the formation of a stable complex. GrpE releases ADP from DnaK; ATP binding to DnaK triggers the release of the substrate protein, thus completing the reaction cycle. Several rounds of ATP-dependent interactions between DnaJ, DnaK and GrpE are required for fully efficient folding. Also involved, together with DnaK and GrpE, in the DNA replication of plasmids through activation of initiation proteins. The protein is Chaperone protein DnaJ of Marinobacter nauticus (strain ATCC 700491 / DSM 11845 / VT8) (Marinobacter aquaeolei).